Here is a 267-residue protein sequence, read N- to C-terminus: MARGPKKHLKRLAAPNHWMLDKLSGKWAPRPSSGPHKLRECLPLILVLRNRLKYALTKKEVTLILMQRLVKVDGKVRTDPNYPAGFMDVISIEKTKENFRLLFDPKGRFTLQRITPEEAKFKLARVTRVETGNQGIPYVHTDDGRTIRYPDPAISIHDTIKIDIESGKITAFIPFEVNNLCMIVGGHNLGRVGAVTHREKHPGSFDIVHVTDTAGHQFATRLSNVFIIGKASQTFVSLPAGKGVRRSRVDERNAALKRRGEKIETVA.

The S4 RNA-binding domain maps to 42-104; that stretch reads LPLILVLRNR…TKENFRLLFD (63 aa).

Belongs to the eukaryotic ribosomal protein eS4 family.

It is found in the cytoplasm. In Dictyostelium discoideum (Social amoeba), this protein is Small ribosomal subunit protein eS4 (rps4).